The sequence spans 185 residues: Elongation factor P (185 aa).

The protein belongs to the elongation factor P family.

The protein resides in the cytoplasm. The protein operates within protein biosynthesis; polypeptide chain elongation. Functionally, involved in peptide bond synthesis. Stimulates efficient translation and peptide-bond synthesis on native or reconstituted 70S ribosomes in vitro. Probably functions indirectly by altering the affinity of the ribosome for aminoacyl-tRNA, thus increasing their reactivity as acceptors for peptidyl transferase. The chain is Elongation factor P from Petrotoga mobilis (strain DSM 10674 / SJ95).